Reading from the N-terminus, the 382-residue chain is Alkanesulfonate monooxygenase (382 aa).

Belongs to the SsuD family.

The enzyme catalyses an alkanesulfonate + FMNH2 + O2 = an aldehyde + FMN + sulfite + H2O + 2 H(+). In terms of biological role, catalyzes the desulfonation of aliphatic sulfonates. The sequence is that of Alkanesulfonate monooxygenase from Pseudomonas sp.